The sequence spans 432 residues: Glycosyltransferase 6 (432 aa).

Over 1–18 (MGKPGGAKTRTAVCLSDG) the chain is Cytoplasmic. A helical; Signal-anchor for type II membrane protein transmembrane segment spans residues 19–39 (VFFLAGAFMSLTLVWSYFSIF). Topologically, residues 40 to 432 (SPSFTSLRHD…LPFDYPNEAW (393 aa)) are lumenal. A glycan (N-linked (GlcNAc...) asparagine) is linked at N315.

Belongs to the glycosyltransferase 34 family.

It is found in the golgi apparatus membrane. Its function is as follows. Probable glycosyltransferase that may be involved in the biosynthesis of xyloglucan. The polypeptide is Glycosyltransferase 6 (GT6) (Arabidopsis thaliana (Mouse-ear cress)).